The following is a 97-amino-acid chain: MSSQQQKQPCTPPPQPQQQQVKQPCQPPPQEPCVPKTKEPCHPKVPEPCQPKVPEPCQPKVPEPCHPKVPEPCQPKVPEPCPSPVIPAPAQQKTKQK.

The disordered stretch occupies residues 1 to 42; that stretch reads MSSQQQKQPCTPPPQPQQQQVKQPCQPPPQEPCVPKTKEPCH. The residue at position 2 (serine 2) is an N-acetylserine. 9 repeat units span residues 3-14, 18-29, 31-38, 39-46, 47-54, 55-62, 63-70, 71-78, and 79-85. Residues 3–29 are 2 X 12 AA approximate repeats; it reads SQQQKQPCTPPPQPQQQQVKQPCQPPP. Residues 31-85 are 7 X 8 AA approximate tandem repeats; that stretch reads EPCVPKTKEPCHPKVPEPCQPKVPEPCQPKVPEPCHPKVPEPCQPKVPEPCPSPV.

It belongs to the cornifin (SPRR) family. As to expression, not detected in normal lung tissue but seen in tumor tissues. Cells around the keratin pearls contain high levels.

The protein localises to the cytoplasm. Cross-linked envelope protein of keratinocytes. It is a keratinocyte protein that first appears in the cell cytosol, but ultimately becomes cross-linked to membrane proteins by transglutaminase. All that results in the formation of an insoluble envelope beneath the plasma membrane. The sequence is that of Cornifin (SPRP) from Sus scrofa (Pig).